The following is a 234-amino-acid chain: Sugar fermentation stimulation protein A (234 aa).

The H-T-H motif DNA-binding region spans 201–220 (LLSEAQQRGVEILAYKAEIS).

The protein belongs to the SfsA family.

Functionally, binds to DNA non-specifically. Could be a regulatory factor involved in maltose metabolism. The protein is Sugar fermentation stimulation protein A of Shigella sonnei (strain Ss046).